The primary structure comprises 107 residues: uncharacterized protein (107 aa).

The first 20 residues, 1 to 20 (MYIKGRLIFFFVVLVIALCS), serve as a signal peptide directing secretion.

This is an uncharacterized protein from Listeria monocytogenes serovar 1/2a (strain ATCC BAA-679 / EGD-e).